A 600-amino-acid polypeptide reads, in one-letter code: Calcium/calmodulin-dependent serine/threonine-protein kinase 1 (600 aa).

A disordered region spans residues 1–99 (MGLCHGKSAA…GGFKRPFPPP (99 aa)). Residues 24–56 (TRVAEAAAAPAKPASPAPSAAAAAAAPAKPGTP) are compositionally biased toward low complexity. Over residues 74–85 (YKGSPANSSVAS) the composition is skewed to polar residues. Residues 147-409 (YELGREVGRG…AAQALCHPWI (263 aa)) enclose the Protein kinase domain. ATP contacts are provided by residues 153-161 (VGRGHFGYT) and lysine 179. Aspartate 275 serves as the catalytic Proton acceptor.

This sequence belongs to the protein kinase superfamily. Ser/Thr protein kinase family. Post-translationally, autophosphorylated. In terms of tissue distribution, highly expressed in roots in the zone of cell division. Expressed in leaf mesophyll cells and at lower levels in mature stems.

It catalyses the reaction L-seryl-[protein] + ATP = O-phospho-L-seryl-[protein] + ADP + H(+). The catalysed reaction is L-threonyl-[protein] + ATP = O-phospho-L-threonyl-[protein] + ADP + H(+). Its activity is regulated as follows. Activated by the binding of calmodulin-like protein 1 (CML1) in the presence of Ca(2+). In terms of biological role, possesses kinase activity in vitro. In Oryza sativa subsp. japonica (Rice), this protein is Calcium/calmodulin-dependent serine/threonine-protein kinase 1 (CAMK1).